A 22-amino-acid chain; its full sequence is Leptoglycin (22 aa).

The disordered stretch occupies residues 1 to 22 (GLLGGLLGPLLGGGGGGGGGLL).

In terms of tissue distribution, expressed by the skin glands.

The protein localises to the secreted. Functionally, antimicrobial protein. Has antibacterial activity against the Gram-negative bacteria E.coli ATCC 28922 (MIC=50 uM), P.aeruginosa ATCC 9027 (MIC=8 uM) and C.freundii ATCC 8090 (MIC=75 uM). Does not have hemolytic activity. The polypeptide is Leptoglycin (Leptodactylus pentadactylus (Smokey jungle frog)).